Here is a 234-residue protein sequence, read N- to C-terminus: tRNA1(Val) (adenine(37)-N6)-methyltransferase (234 aa).

Belongs to the methyltransferase superfamily. tRNA (adenine-N(6)-)-methyltransferase family.

The protein resides in the cytoplasm. The enzyme catalyses adenosine(37) in tRNA1(Val) + S-adenosyl-L-methionine = N(6)-methyladenosine(37) in tRNA1(Val) + S-adenosyl-L-homocysteine + H(+). In terms of biological role, specifically methylates the adenine in position 37 of tRNA(1)(Val) (anticodon cmo5UAC). The sequence is that of tRNA1(Val) (adenine(37)-N6)-methyltransferase from Phocaeicola vulgatus (strain ATCC 8482 / DSM 1447 / JCM 5826 / CCUG 4940 / NBRC 14291 / NCTC 11154) (Bacteroides vulgatus).